The primary structure comprises 551 residues: Transcription factor 7-like 1-B (551 aa).

Over residues Met1–Glu11 the composition is skewed to gly residues. An interaction with CTNNB1-A region spans residues Met1–Ser61. Disordered stretches follow at residues Met1–Arg77, Gly183–Pro213, Trp391–Thr474, and Ser492–Ile515. Composition is skewed to basic and acidic residues over residues Glu17–Pro32 and Ser52–Arg77. The interaction with AES and TLE4-A stretch occupies residues Leu109 to Val312. The segment at residues Ile324–Ser392 is a DNA-binding region (HMG box). Basic and acidic residues predominate over residues Lys407 to Thr416. Residues Gln408–Asp551 are interaction with CTBP-B. The span at Ser445 to Ser464 shows a compositional bias: low complexity. A compositionally biased stretch (polar residues) spans Glu465–Thr474.

It belongs to the TCF/LEF family. Interacts with csnk1e, ctnnb1-A, ctbp-B, dact1-A and gsk3b. May interact with ase and tle4-A. Interacts with tle1-B. In terms of processing, phosphorylated. Phosphorylation by csnk1e promotes binding to ctnnb1-A while phosphorylation by gsk3b may reverse this effect.

Its subcellular location is the nucleus. Its function is as follows. Participates in the Wnt signaling pathway. Binds to DNA and acts as a repressor in the absence of ctnnb1-A and possibly ctnnb1-B, and as an activator in the presence of these proteins. Required early in development for the establishment of the dorsal body axis in response to maternal Wnt signaling. This Xenopus laevis (African clawed frog) protein is Transcription factor 7-like 1-B (tcf7l1-b).